The sequence spans 113 residues: uncharacterized protein (113 aa).

The signal sequence occupies residues 1–20 (MMKKSILAFLLLTSSAAALA).

This is an uncharacterized protein from Escherichia coli (strain K12).